A 453-amino-acid chain; its full sequence is Phosphoglucosamine mutase (453 aa).

The Phosphoserine intermediate role is filled by Ser-108. Positions 108, 247, 249, and 251 each coordinate Mg(2+). Position 108 is a phosphoserine (Ser-108).

It belongs to the phosphohexose mutase family. Mg(2+) is required as a cofactor. Activated by phosphorylation.

It carries out the reaction alpha-D-glucosamine 1-phosphate = D-glucosamine 6-phosphate. Catalyzes the conversion of glucosamine-6-phosphate to glucosamine-1-phosphate. This chain is Phosphoglucosamine mutase, found in Methylobacillus flagellatus (strain ATCC 51484 / DSM 6875 / VKM B-1610 / KT).